The following is a 144-amino-acid chain: 3-dehydroquinate dehydratase (144 aa).

The active-site Proton acceptor is Tyr24. 3 residues coordinate substrate: Asn76, His82, and Asp89. His102 serves as the catalytic Proton donor. Substrate-binding positions include 103–104 (LS) and Arg113.

Belongs to the type-II 3-dehydroquinase family. As to quaternary structure, homododecamer.

It carries out the reaction 3-dehydroquinate = 3-dehydroshikimate + H2O. The protein operates within metabolic intermediate biosynthesis; chorismate biosynthesis; chorismate from D-erythrose 4-phosphate and phosphoenolpyruvate: step 3/7. Functionally, catalyzes a trans-dehydration via an enolate intermediate. This chain is 3-dehydroquinate dehydratase, found in Nitrosomonas europaea (strain ATCC 19718 / CIP 103999 / KCTC 2705 / NBRC 14298).